The primary structure comprises 746 residues: Exostosin-1 (746 aa).

The Cytoplasmic portion of the chain corresponds to 1–7; it reads MQAKKRY. The helical; Signal-anchor for type II membrane protein transmembrane segment at 8-28 threads the bilayer; that stretch reads FILLSAGSCLALLFYFGGVQF. Topologically, residues 29–746 are lumenal; it reads RASRSHSRRE…RKKYRDIERL (718 aa). N-linked (GlcNAc...) asparagine glycosylation occurs at Asn-89. Intrachain disulfides connect Cys-98–Cys-103 and Cys-109–Cys-152. Positions 166 and 203 each coordinate a protein. Residues Lys-267, Lys-269, Tyr-271, and Arg-280 each coordinate UDP. A disulfide bridge connects residues Cys-298 and Cys-312. His-300 contributes to the a protein binding site. Residues Tyr-319 and Tyr-324 each contribute to the UDP site. A glycan (N-linked (GlcNAc...) asparagine) is linked at Asn-330. 2 disulfides stabilise this stretch: Cys-334–Cys-355 and Cys-652–Cys-704. Positions 346 and 349 each coordinate UDP.

This sequence belongs to the glycosyltransferase 47 family. Part of the heparan sulfate polymerase, a dimeric complex composed of EXT1 and EXT2. Could also form homooligomeric complexes. Interacts with NDST1. Post-translationally, N-glycosylated.

Its subcellular location is the golgi apparatus membrane. The protein localises to the golgi apparatus. It localises to the cis-Golgi network membrane. It is found in the endoplasmic reticulum membrane. The catalysed reaction is 3-O-{alpha-D-GlcNAc-[(1-&gt;4)-beta-D-GlcA-(1-&gt;4)-alpha-D-GlcNAc](n)-(1-&gt;4)-beta-D-GlcA-(1-&gt;3)-beta-D-Gal-(1-&gt;3)-beta-D-Gal-(1-&gt;4)-beta-D-Xyl}-L-seryl-[protein] + UDP-alpha-D-glucuronate = 3-O-{[(1-&gt;4)-beta-D-GlcA-(1-&gt;4)-alpha-D-GlcNAc](n+1)-(1-&gt;4)-beta-D-GlcA-(1-&gt;3)-beta-D-Gal-(1-&gt;3)-beta-D-Gal-(1-&gt;4)-beta-D-Xyl}-L-seryl-[protein] + UDP + H(+). The protein operates within protein modification; protein glycosylation. Glycosyltransferase forming with EXT2 the heterodimeric heparan sulfate polymerase which catalyzes the elongation of the heparan sulfate glycan backbone. Glycan backbone extension consists in the alternating transfer of (1-&gt;4)-beta-D-GlcA and (1-&gt;4)-alpha-D-GlcNAc residues from their respective UDP-sugar donors. Both EXT1 and EXT2 are required for the full activity of the polymerase since EXT1 bears the N-acetylglucosaminyl-proteoglycan 4-beta-glucuronosyltransferase activity within the complex while EXT2 carries the glucuronosyl-N-acetylglucosaminyl-proteoglycan 4-alpha-N-acetylglucosaminyltransferase activity. Heparan sulfate proteoglycans are ubiquitous components of the extracellular matrix and play an important role in tissue homeostasis and signaling. The polypeptide is Exostosin-1 (Mus musculus (Mouse)).